Here is a 405-residue protein sequence, read N- to C-terminus: L-carnitine CoA-transferase (405 aa).

CoA contacts are provided by lysine 97 and arginine 104. The active-site Nucleophile is the aspartate 169.

The protein belongs to the CoA-transferase III family. CaiB subfamily. Homodimer.

Its subcellular location is the cytoplasm. The catalysed reaction is crotonobetainyl-CoA + (R)-carnitine = crotonobetaine + (R)-carnitinyl-CoA. It carries out the reaction 4-(trimethylamino)butanoyl-CoA + (R)-carnitine = (R)-carnitinyl-CoA + 4-(trimethylamino)butanoate. It participates in amine and polyamine metabolism; carnitine metabolism. In terms of biological role, catalyzes the reversible transfer of the CoA moiety from gamma-butyrobetainyl-CoA to L-carnitine to generate L-carnitinyl-CoA and gamma-butyrobetaine. Is also able to catalyze the reversible transfer of the CoA moiety from gamma-butyrobetainyl-CoA or L-carnitinyl-CoA to crotonobetaine to generate crotonobetainyl-CoA. The chain is L-carnitine CoA-transferase from Escherichia coli O17:K52:H18 (strain UMN026 / ExPEC).